The primary structure comprises 632 residues: tRNA uridine 5-carboxymethylaminomethyl modification enzyme MnmG (632 aa).

FAD is bound at residue 15 to 20 (GAGHAG). The segment at 205 to 231 (PRVDGNTIDYSKTQEEPGDKEPRHFSY) is disordered. The span at 216 to 228 (KTQEEPGDKEPRH) shows a compositional bias: basic and acidic residues. Residue 276–290 (GPRYCPSIEDKVVRF) coordinates NAD(+).

The protein belongs to the MnmG family. In terms of assembly, homodimer. Heterotetramer of two MnmE and two MnmG subunits. Requires FAD as cofactor.

The protein localises to the cytoplasm. Its function is as follows. NAD-binding protein involved in the addition of a carboxymethylaminomethyl (cmnm) group at the wobble position (U34) of certain tRNAs, forming tRNA-cmnm(5)s(2)U34. The chain is tRNA uridine 5-carboxymethylaminomethyl modification enzyme MnmG from Lactobacillus johnsonii (strain CNCM I-12250 / La1 / NCC 533).